The following is a 201-amino-acid chain: IMP cyclohydrolase (201 aa).

The protein belongs to the archaeal IMP cyclohydrolase family.

The enzyme catalyses IMP + H2O = 5-formamido-1-(5-phospho-D-ribosyl)imidazole-4-carboxamide. Its pathway is purine metabolism; IMP biosynthesis via de novo pathway; IMP from 5-formamido-1-(5-phospho-D-ribosyl)imidazole-4-carboxamide: step 1/1. Functionally, catalyzes the cyclization of 5-formylamidoimidazole-4-carboxamide ribonucleotide to IMP. This Methanococcus maripaludis (strain DSM 14266 / JCM 13030 / NBRC 101832 / S2 / LL) protein is IMP cyclohydrolase.